A 579-amino-acid polypeptide reads, in one-letter code: MAAKSDGAAASASPDPEGAAGGARGSAGGRGEAAAAAGPPGVVGAGGPGPRYELRDCCWVLCALLVFFSDGATDLWLAASYYLQNQHTYFSLTLLFVLLPSLVVQLLSFRWFVYDYSEPAGSPGPAVSTKDSVAGGAAISTKDSAGAFRTKEGSPEPGPQPAPSSASAYRRRCCRLCIWLLQTLVHLLQLGQVWRYLRALYLGLQSRWRGERLRRHFYWQMLFESADVSMLRLLETFLRSAPQLVLQLSLLVHRGGAPDLLPALSTSASLVSLAWTLASYQKVLRDSRDDKRPLSYKGAVAQVLWHLFSIAARGLAFALFASVYKLYFGIFIVAHWCVMTFWVIQGETDFCMSKWEEIIYNMVVGIIYIFCWFNVKEGRSRRRMTLYHCIVLLENAALTGFWYSSRNFSTDFYSLIMVCVVASSFALGIFFMCVYYCLLHPNGPMLGPQAPGCIFRKASEPCGPPADAITSPPRSLPRTTGAERDGASAGERAGTPTPPVFQVRPGLPPTPVARTLRTEGPVIRIDLPRKKYPAWDAHFIDRRLRKTILALEYSSPATPRLQYRSVGTSQELLEYETTV.

Low complexity predominate over residues 1–18 (MAAKSDGAAASASPDPEG). Positions 1-40 (MAAKSDGAAASASPDPEGAAGGARGSAGGRGEAAAAAGPP) are disordered. Residues 19–31 (AAGGARGSAGGRG) show a composition bias toward gly residues. 2 consecutive transmembrane segments (helical) span residues 59 to 79 (WVLC…WLAA) and 89 to 109 (YFSL…LLSF). The tract at residues 146–165 (GAFRTKEGSPEPGPQPAPSS) is disordered. A run of 5 helical transmembrane segments spans residues 260-280 (LLPA…LASY), 314-334 (GLAF…FIVA), 355-375 (WEEI…WFNV), 384-404 (MTLY…FWYS), and 415-435 (LIMV…MCVY). The tract at residues 466–510 (ADAITSPPRSLPRTTGAERDGASAGERAGTPTPPVFQVRPGLPPT) is disordered.

Belongs to the XK family.

It is found in the cell membrane. In Homo sapiens (Human), this protein is XK-related protein 7.